Reading from the N-terminus, the 463-residue chain is Elongation factor 1-alpha 2 (463 aa).

Gly-2 carries the n,N,N-trimethylglycine modification. The 238-residue stretch at Lys-5–Thr-242 folds into the tr-type G domain. The tract at residues Gly-14–Ser-21 is G1. Asp-17, Ser-18, Gly-19, Lys-20, Ser-21, and Thr-22 together coordinate GTP. Asp-17 provides a ligand contact to Mg(2+). Lys-36 carries the N6,N6,N6-trimethyllysine; alternate modification. Lys-36 is modified (N6,N6-dimethyllysine; alternate). Position 36 is an N6-methyllysine; alternate (Lys-36). N6,N6,N6-trimethyllysine is present on Lys-55. The residue at position 55 (Lys-55) is an N6,N6-dimethyllysine. The interval Gly-70–Asp-74 is G2. Lys-79 is subject to N6,N6,N6-trimethyllysine. Residues Asp-91–Gly-94 form a G3 region. Positions 153, 154, and 156 each coordinate GTP. Residues Asn-153 to Asp-156 form a G4 region. Position 163 is a phosphoserine (Ser-163). Lys-165 is modified (N6,N6-dimethyllysine; alternate). Residue Lys-165 is modified to N6-methyllysine; alternate. Lys-165 is modified (N6,N6,N6-trimethyllysine; alternate; by EEF1AKMT3). At Lys-179 the chain carries N6-acetyllysine. The GTP site is built by Ser-194, Gly-195, and Trp-196. Residues Ser-194–Trp-196 are G5. Ser-224 carries the post-translational modification Phosphoserine. Residue Thr-239 is modified to Phosphothreonine. Glu-301 and Glu-374 each carry 5-glutamyl glycerylphosphorylethanolamine. Lys-439 carries the N6-acetyllysine modification. The interval Lys-444–Lys-463 is disordered.

The protein belongs to the TRAFAC class translation factor GTPase superfamily. Classic translation factor GTPase family. EF-Tu/EF-1A subfamily. Homodimer; arranged in a 'head to tail' dimer configuration. In terms of processing, trimethylated at Lys-165 by EEF1AKMT3. Mono-, di-, and trimethylated at Lys-36 by EEF1AKMT4; trimethylated form is predominant. Methylation by EEF1AKMT4 contributes to the fine-tuning of translation rates for a subset of tRNAs. Trimethylated at the N-terminus and dimethylated at Lys-55 by METTL13.

Its subcellular location is the endoplasmic reticulum membrane. It catalyses the reaction GTP + H2O = GDP + phosphate + H(+). Its function is as follows. Translation elongation factor that catalyzes the GTP-dependent binding of aminoacyl-tRNA (aa-tRNA) to the A-site of ribosomes during the elongation phase of protein synthesis. Base pairing between the mRNA codon and the aa-tRNA anticodon promotes GTP hydrolysis, releasing the aa-tRNA from EEF1A1 and allowing its accommodation into the ribosome. The growing protein chain is subsequently transferred from the P-site peptidyl tRNA to the A-site aa-tRNA, extending it by one amino acid through ribosome-catalyzed peptide bond formation. This Bos taurus (Bovine) protein is Elongation factor 1-alpha 2 (EEF1A2).